A 358-amino-acid polypeptide reads, in one-letter code: Neutral protease 2 homolog MGYG_02351 (358 aa).

The N-terminal stretch at 1 to 17 is a signal peptide; that stretch reads MQFVALLAALGAPLALA. Residues 18–183 constitute a propeptide that is removed on maturation; sequence ASIPAAHNNS…DSPAGVIDKR (166 aa). 2 cysteine pairs are disulfide-bonded: Cys191-Cys260 and Cys267-Cys285. His309 lines the Zn(2+) pocket. Glu310 is an active-site residue. His313 and Asp324 together coordinate Zn(2+).

This sequence belongs to the peptidase M35 family. Requires Zn(2+) as cofactor.

The protein localises to the secreted. It carries out the reaction Preferential cleavage of bonds with hydrophobic residues in P1'. Also 3-Asn-|-Gln-4 and 8-Gly-|-Ser-9 bonds in insulin B chain.. Its function is as follows. Secreted metalloproteinase that allows assimilation of proteinaceous substrates. Shows high activities on basic nuclear substrates such as histone and protamine. May be involved in virulence. In Arthroderma gypseum (strain ATCC MYA-4604 / CBS 118893) (Microsporum gypseum), this protein is Neutral protease 2 homolog MGYG_02351.